The chain runs to 134 residues: Transcription antitermination protein NusB (134 aa).

This sequence belongs to the NusB family.

Its function is as follows. Involved in transcription antitermination. Required for transcription of ribosomal RNA (rRNA) genes. Binds specifically to the boxA antiterminator sequence of the ribosomal RNA (rrn) operons. The sequence is that of Transcription antitermination protein NusB from Syntrophomonas wolfei subsp. wolfei (strain DSM 2245B / Goettingen).